The following is a 517-amino-acid chain: UPF0522 protein B (517 aa).

An N-terminal signal peptide occupies residues 1-19; it reads MNKTIILLLISIIFEIVIS. Residues N148, N245, N333, N345, N370, N423, N432, and N495 are each glycosylated (N-linked (GlcNAc...) asparagine).

Belongs to the UPF0522 family.

The protein localises to the secreted. The polypeptide is UPF0522 protein B (Dictyostelium discoideum (Social amoeba)).